We begin with the raw amino-acid sequence, 359 residues long: uncharacterized protein (359 aa).

The signal sequence occupies residues 1–15; the sequence is MSIVLAIDTATAAVT. Residues 212–359 form the N-acetyltransferase domain; it reads IVIGTLTPAD…DAYLMRREAQ (148 aa).

This is an uncharacterized protein from Mycobacterium leprae (strain TN).